Reading from the N-terminus, the 304-residue chain is MLNTPFELVTSLGFAGFVLLLLAMPLAFWAVSSQSRAGLVRLLVAVANLLFTAQLILRWWQSGHFPISNLYESLCFLAWACTLTQLLVERAWPSPIVAAAATPMGLGCIAFASFALPDQLQSAAPLVPALRSSWLVMHVSVIMVSYAALLVGSLLSLAVLVTDRDQSLELRSSSIGSGGFRQAASIANGGSVQLQSVQLSTNEQLDSLSYRTITVGFLMLTVGIVSGAVWANEAWGSYWSWDPKETWALICWLVYAAYLHTRLSRGWQGRRPALVAVVGLVVIAVCYIGVNLLGIGLHSYGWFF.

Transmembrane regions (helical) follow at residues 11–31 (SLGF…FWAV), 37–57 (AGLV…QLIL), 63–83 (GHFP…ACTL), 96–116 (IVAA…SFAL), 141–161 (VIMV…AVLV), 212–232 (TITV…VWAN), 246–263 (TWAL…HTRL), and 275–295 (VAVV…LLGI).

This sequence belongs to the CcmF/CycK/Ccl1/NrfE/CcsA family. As to quaternary structure, may interact with ccs1.

It localises to the cellular thylakoid membrane. In terms of biological role, required during biogenesis of c-type cytochromes (cytochrome c6 and cytochrome f) at the step of heme attachment. This Synechococcus sp. (strain CC9605) protein is Cytochrome c biogenesis protein CcsA.